A 465-amino-acid polypeptide reads, in one-letter code: MNAQLTMEAIGELHGVSHEPVPAPADLLGGSPHARSSVGHRGSHLPPAHPRSMGMASLLDGGSGGSDYHHHHRAPEHSLAGPLHPTMTMACETPPGMSMPTTYTTLTPLQPLPPISTVSDKFPHHHHHHHHHHHPHHHQRLAGNVSGSFTLMRDERGLASMNNLYTPYHKDVAGMGQSLSPLSGSGLGSIHNSQQGLPHYAHPGAAMPTDKMLTPNGFEAHHPAMLGRHGEQHLTPTSAGMVPINGLPPHHPHAHLNAQGHGQLLGTAREPNPSVTGAQVSNGSNSGQMEEINTKEVAQRITTELKRYSIPQAIFAQRVLCRSQGTLSDLLRNPKPWSKLKSGRETFRRMWKWLQEPEFQRMSALRLAACKRKEQEHGKDRGNTPKKPRLVFTDVQRRTLHAIFKENKRPSKELQITISQQLGLELSTVSNFFMNARRRSLDKWQDEGGSNSGSSSSSSSTCTKA.

Disordered stretches follow at residues 15-84 and 119-141; these read GVSH…GPLH and SDKF…HQRL. Positions 123 to 140 are enriched in basic residues; sequence PHHHHHHHHHHHPHHHQR. Residues 283-369 constitute a DNA-binding region (CUT); it reads GSNSGQMEEI…QRMSALRLAA (87 aa). The segment at residues 385–444 is a DNA-binding region (homeobox); that stretch reads PKKPRLVFTDVQRRTLHAIFKENKRPSKELQITISQQLGLELSTVSNFFMNARRRSLDKW. Residues 443–465 form a disordered region; sequence KWQDEGGSNSGSSSSSSSTCTKA. Positions 448 to 465 are enriched in low complexity; the sequence is GGSNSGSSSSSSSTCTKA.

The protein belongs to the CUT homeobox family. Binds DNA as a monomer.

The protein localises to the nucleus. Its function is as follows. Transcriptional activator. Binds the consensus sequence 5'-DHWATTGAYTWWD-3' on a variety of gene promoters such as those of HNF3B and TTR. Important for liver genes transcription. Stimulates the expression of Onecut3 in the developing endoderm. The protein is Hepatocyte nuclear factor 6 (Onecut1) of Mus musculus (Mouse).